We begin with the raw amino-acid sequence, 252 residues long: ATP synthase subunit a, chloroplastic (252 aa).

Transmembrane regions (helical) follow at residues 41 to 61 (GQVLITSWIVLGGVIIFTLLA), 100 to 120 (VPFLGTIFIFVFVSNWAGALL), 138 to 158 (DINTTVSLALLTSVSYFYAGI), 204 to 224 (LIVGVLVALVPLFVPIPLMLL), and 225 to 245 (GVFTSAIQALVFATLAGAYIG).

The protein belongs to the ATPase A chain family. F-type ATPases have 2 components, CF(1) - the catalytic core - and CF(0) - the membrane proton channel. CF(1) has five subunits: alpha(3), beta(3), gamma(1), delta(1), epsilon(1). CF(0) has four main subunits: a, b, b' and c.

It is found in the plastid. Its subcellular location is the chloroplast thylakoid membrane. Its function is as follows. Key component of the proton channel; it plays a direct role in the translocation of protons across the membrane. This chain is ATP synthase subunit a, chloroplastic, found in Oedogonium cardiacum (Filamentous green alga).